Consider the following 113-residue polypeptide: uncharacterized protein (113 aa).

A signal peptide spans Met-1–Ser-22. Asn-47 is a glycosylation site (N-linked (GlcNAc...) asparagine).

The protein resides in the secreted. This is an uncharacterized protein from Caenorhabditis elegans.